The chain runs to 65 residues: Beta-mammal toxin Tma1 (65 aa).

Positions lysine 2–glycine 64 constitute an LCN-type CS-alpha/beta domain. Disulfide bonds link cysteine 12–cysteine 63, cysteine 16–cysteine 38, cysteine 24–cysteine 44, and cysteine 28–cysteine 46.

The protein belongs to the long (4 C-C) scorpion toxin superfamily. Sodium channel inhibitor family. In terms of tissue distribution, expressed by the venom gland.

It localises to the secreted. In terms of biological role, beta toxins bind voltage-independently at site-4 of sodium channels (Nav) and shift the voltage of activation toward more negative potentials thereby affecting sodium channel activation and promoting spontaneous and repetitive firing. This toxin acts on human Nav1.4/SCN4A and Nav1.6/SCN8A voltage-gated sodium channels. The polypeptide is Beta-mammal toxin Tma1 (Tityus macrochirus (Scorpion)).